Here is a 257-residue protein sequence, read N- to C-terminus: Receptor expression-enhancing protein 4 (257 aa).

The next 2 membrane-spanning stretches (helical) occupy residues 1 to 21 (MVSW…YPAY) and 42 to 62 (WIVF…ISWF). Phosphoserine is present on residues Ser152 and Ser194. The segment at 177–257 (VPRRRPPIGY…KKAMPSDMDS (81 aa)) is disordered. Position 196 is a phosphothreonine (Thr196). Phosphoserine occurs at positions 202 and 253.

Belongs to the DP1 family.

The protein localises to the endoplasmic reticulum membrane. Its function is as follows. Microtubule-binding protein required to ensure proper cell division and nuclear envelope reassembly by sequestering the endoplasmic reticulum away from chromosomes during mitosis. Probably acts by clearing the endoplasmic reticulum membrane from metaphase chromosomes. This chain is Receptor expression-enhancing protein 4 (Reep4), found in Mus musculus (Mouse).